Here is a 487-residue protein sequence, read N- to C-terminus: 2-aminomuconic semialdehyde dehydrogenase (487 aa).

231–236 (GSQPTA) lines the NAD(+) pocket. The Proton acceptor role is filled by Glu253. Cys287 serves as the catalytic Nucleophile.

Belongs to the aldehyde dehydrogenase family.

Its subcellular location is the cytoplasm. The catalysed reaction is 2-aminomuconate 6-semialdehyde + NAD(+) + H2O = (2Z,4E)-2-aminomuconate + NADH + 2 H(+). Its pathway is amino-acid degradation; L-kynurenine degradation. In terms of biological role, catalyzes the NAD-dependent oxidation of 2-aminomuconic semialdehyde of the kynurenine metabolic pathway in L-tryptophan degradation. The sequence is that of 2-aminomuconic semialdehyde dehydrogenase (ALDH8A1) from Bos taurus (Bovine).